We begin with the raw amino-acid sequence, 954 residues long: Centrosomal protein of 112 kDa (954 aa).

Residues 276-954 are a coiled coil; sequence QKHDAEVQKI…EELTTYQSRR (679 aa).

Its subcellular location is the cytoplasm. The protein resides in the cytoskeleton. It localises to the microtubule organizing center. It is found in the centrosome. The protein is Centrosomal protein of 112 kDa (Cep112) of Mus musculus (Mouse).